Consider the following 406-residue polypeptide: Tyrosine--tRNA ligase (406 aa).

Y35 provides a ligand contact to L-tyrosine. The 'HIGH' region signature appears at 40 to 49 (PTADSLHVGH). Y168 and Q172 together coordinate L-tyrosine. Residues 228 to 232 (KMGKT) carry the 'KMSKS' region motif. K231 lines the ATP pocket. Residues 340 to 404 (STVLDIIAKT…RGKKNYNKIE (65 aa)) form the S4 RNA-binding domain.

Belongs to the class-I aminoacyl-tRNA synthetase family. TyrS type 1 subfamily. In terms of assembly, homodimer.

Its subcellular location is the cytoplasm. The catalysed reaction is tRNA(Tyr) + L-tyrosine + ATP = L-tyrosyl-tRNA(Tyr) + AMP + diphosphate + H(+). Functionally, catalyzes the attachment of tyrosine to tRNA(Tyr) in a two-step reaction: tyrosine is first activated by ATP to form Tyr-AMP and then transferred to the acceptor end of tRNA(Tyr). In Clostridium botulinum (strain Alaska E43 / Type E3), this protein is Tyrosine--tRNA ligase.